The chain runs to 385 residues: L-arabinitol 4-dehydrogenase (385 aa).

Residues Cys-54, His-79, Glu-80, Cys-109, Cys-112, Cys-115, Cys-123, and Glu-164 each coordinate Zn(2+). Residues 191-192 (PI), Asp-212, Arg-217, Ile-292, and 316-318 (QYR) each bind NAD(+).

Belongs to the zinc-containing alcohol dehydrogenase family. Homotetramer. Zn(2+) serves as cofactor.

It carries out the reaction L-arabinitol + NAD(+) = L-xylulose + NADH + H(+). It participates in carbohydrate degradation; L-arabinose degradation via L-arabinitol; D-xylulose 5-phosphate from L-arabinose (fungal route): step 2/5. Functionally, catalyzes the NAD-dependent oxidation of L-arabinitol to L-xylulose in the fungal L-arabinose catabolic pathway. L-arabinose catabolism is important for using plant material as a carbon source. NADP cannot act as a cosubstrate. This is L-arabinitol 4-dehydrogenase (lad1) from Penicillium rubens (strain ATCC 28089 / DSM 1075 / NRRL 1951 / Wisconsin 54-1255) (Penicillium chrysogenum).